Reading from the N-terminus, the 370-residue chain is MSKKRIVVGMSGGVDSSVTAWLLKQQGYDVVGLFMKNWEDDDDSEYCSTRQDWIDVVSVADLIGVDVEAVNFAAEYKDRVFADFLREYSAGRTPNPDVLCNAEIKFKAFLDHAMALGADTIATGHYARVREVDGRFELLKAFDHTKDQSYFLHRLNQAQLSRTLFPLGEMPKTKVREIAAEIGLPNAKKKDSTGICFIGERPFRDFLNRYLPTKPGPIKTPDGKTIGEHIGLAFYTLGQRKGIGIGGSRDGTGDAWYVARKDMAANTLYVVQGHDHPWLLAHTVHADDLSWVAGHAPAEGTHLGAKTRYRQADAPCTVARAAGGALTLTFSEAQWAVTPGQSAVLYDGEVCLGGGIISAAEPAVVEKAIA.

Residues 9–16 (GMSGGVDS) and M35 contribute to the ATP site. Residues 95-97 (NPD) are interaction with target base in tRNA. The active-site Nucleophile is C100. A disulfide bridge links C100 with C196. G124 provides a ligand contact to ATP. An interaction with tRNA region spans residues 146–148 (KDQ). C196 serves as the catalytic Cysteine persulfide intermediate. The interval 308-309 (RY) is interaction with tRNA.

Belongs to the MnmA/TRMU family.

Its subcellular location is the cytoplasm. The catalysed reaction is S-sulfanyl-L-cysteinyl-[protein] + uridine(34) in tRNA + AH2 + ATP = 2-thiouridine(34) in tRNA + L-cysteinyl-[protein] + A + AMP + diphosphate + H(+). Catalyzes the 2-thiolation of uridine at the wobble position (U34) of tRNA, leading to the formation of s(2)U34. This Ralstonia pickettii (strain 12J) protein is tRNA-specific 2-thiouridylase MnmA.